The primary structure comprises 277 residues: Small ribosomal subunit protein uS5 (277 aa).

Residues 18–40 (AAGRPSWSWQRPGERARTPGRKA) are disordered. Positions 29–40 (PGERARTPGRKA) are enriched in basic and acidic residues. Residues 87 to 150 (LKDEVLKIMP…ILAKLSIIPV (64 aa)) enclose the S5 DRBM domain.

This sequence belongs to the universal ribosomal protein uS5 family. Component of the small ribosomal subunit.

The protein resides in the cytoplasm. It localises to the nucleus. Its subcellular location is the nucleolus. Its function is as follows. Component of the ribosome, a large ribonucleoprotein complex responsible for the synthesis of proteins in the cell. The small ribosomal subunit (SSU) binds messenger RNAs (mRNAs) and translates the encoded message by selecting cognate aminoacyl-transfer RNA (tRNA) molecules. The large subunit (LSU) contains the ribosomal catalytic site termed the peptidyl transferase center (PTC), which catalyzes the formation of peptide bonds, thereby polymerizing the amino acids delivered by tRNAs into a polypeptide chain. The nascent polypeptides leave the ribosome through a tunnel in the LSU and interact with protein factors that function in enzymatic processing, targeting, and the membrane insertion of nascent chains at the exit of the ribosomal tunnel. Plays a role in the assembly and function of the 40S ribosomal subunit. Mutations in this protein affects the control of translational fidelity. Involved in nucleolar processing of pre-18S ribosomal RNA and ribosome assembly. In Ictalurus punctatus (Channel catfish), this protein is Small ribosomal subunit protein uS5 (rps2).